The primary structure comprises 225 residues: Lipoarabinomannan carrier protein LprG (225 aa).

The first 21 residues, 1–21 (MRNRIRLALIPVAVAAIALAG), serve as a signal peptide directing secretion. Cys-22 carries the N-palmitoyl cysteine lipid modification. Residue Cys-22 is the site of S-diacylglycerol cysteine attachment.

The protein belongs to the LppX/LprAFG lipoprotein family. Modified by Lgt on Cys-22 with an S-linked diacylglyceral, signal peptide is removed by LspA, Cys-22 is further modifed with a fatty acid on its amino group by Lnt yielding a triacylated protein.

It localises to the cell inner membrane. In terms of biological role, helps membrane protein MAB_2807 (P55) transport triacylglycerides (TAG) across the inner cell membrane into the periplasm and probably ultimately to the outer membrane. Binds TAG in its hydrophobic cavity and transfers it between lipid bilayers. TAG probably regulates lipid metabolism and growth regulation and plays a structural role in the outer membrane. Also binds mannosides, lipoarabinomannan and lipomannan and various glycolipids in the same cavity. The chain is Lipoarabinomannan carrier protein LprG from Mycobacteroides abscessus (strain ATCC 19977 / DSM 44196 / CCUG 20993 / CIP 104536 / JCM 13569 / NCTC 13031 / TMC 1543 / L948) (Mycobacterium abscessus).